Here is a 653-residue protein sequence, read N- to C-terminus: Fructose-1,6-bisphosphatase class 3 (653 aa).

The protein belongs to the FBPase class 3 family. Requires Mn(2+) as cofactor.

It catalyses the reaction beta-D-fructose 1,6-bisphosphate + H2O = beta-D-fructose 6-phosphate + phosphate. Its pathway is carbohydrate biosynthesis; gluconeogenesis. The chain is Fructose-1,6-bisphosphatase class 3 from Listeria innocua serovar 6a (strain ATCC BAA-680 / CLIP 11262).